Reading from the N-terminus, the 200-residue chain is MRKVGIMGGTFNPIHFVHLLLAEAAYEQYHLEEIIFLPSKRPAYKPLSELIEEEHRFHMIELAISDNPHFSVSDMEFHREGNTYTADTLLELTKKFPDTEFYFIIGGDSLFELEKWSRPEIVMEKAHIVAAGRDDKDDDQMLQKIMELNEKYKAKIELLRVPMMEVSSRMLRERVKEGQSIRYFLPEAVRSYIIKHGFYL.

The protein belongs to the NadD family.

It catalyses the reaction nicotinate beta-D-ribonucleotide + ATP + H(+) = deamido-NAD(+) + diphosphate. The protein operates within cofactor biosynthesis; NAD(+) biosynthesis; deamido-NAD(+) from nicotinate D-ribonucleotide: step 1/1. Its function is as follows. Catalyzes the reversible adenylation of nicotinate mononucleotide (NaMN) to nicotinic acid adenine dinucleotide (NaAD). The sequence is that of Probable nicotinate-nucleotide adenylyltransferase from Lachnoclostridium phytofermentans (strain ATCC 700394 / DSM 18823 / ISDg) (Clostridium phytofermentans).